Consider the following 310-residue polypeptide: Homoserine kinase (310 aa).

91 to 101 serves as a coordination point for ATP; it reads PIGSGLGSSAC.

This sequence belongs to the GHMP kinase family. Homoserine kinase subfamily.

The protein resides in the cytoplasm. It carries out the reaction L-homoserine + ATP = O-phospho-L-homoserine + ADP + H(+). The protein operates within amino-acid biosynthesis; L-threonine biosynthesis; L-threonine from L-aspartate: step 4/5. Functionally, catalyzes the ATP-dependent phosphorylation of L-homoserine to L-homoserine phosphate. The protein is Homoserine kinase of Escherichia coli (strain K12 / MC4100 / BW2952).